Consider the following 136-residue polypeptide: Nucleoside diphosphate kinase (136 aa).

Positions 10, 58, 86, 92, 104, and 114 each coordinate ATP. His-117 (pros-phosphohistidine intermediate) is an active-site residue.

The protein belongs to the NDK family. Homotetramer. It depends on Mg(2+) as a cofactor.

The protein resides in the cytoplasm. The catalysed reaction is a 2'-deoxyribonucleoside 5'-diphosphate + ATP = a 2'-deoxyribonucleoside 5'-triphosphate + ADP. The enzyme catalyses a ribonucleoside 5'-diphosphate + ATP = a ribonucleoside 5'-triphosphate + ADP. Major role in the synthesis of nucleoside triphosphates other than ATP. The ATP gamma phosphate is transferred to the NDP beta phosphate via a ping-pong mechanism, using a phosphorylated active-site intermediate. This is Nucleoside diphosphate kinase from Mycobacterium ulcerans (strain Agy99).